A 147-amino-acid chain; its full sequence is Ribosome maturation factor RimP (147 aa).

The protein belongs to the RimP family.

It is found in the cytoplasm. Functionally, required for maturation of 30S ribosomal subunits. This Legionella pneumophila (strain Lens) protein is Ribosome maturation factor RimP.